The primary structure comprises 301 residues: Homoserine O-acetyltransferase (301 aa).

Cysteine 142 (acyl-thioester intermediate) is an active-site residue. Substrate contacts are provided by lysine 163 and serine 192. The active-site Proton acceptor is the histidine 235. Glutamate 237 is a catalytic residue. Arginine 249 is a substrate binding site.

Belongs to the MetA family.

It is found in the cytoplasm. The catalysed reaction is L-homoserine + acetyl-CoA = O-acetyl-L-homoserine + CoA. It participates in amino-acid biosynthesis; L-methionine biosynthesis via de novo pathway; O-acetyl-L-homoserine from L-homoserine: step 1/1. Functionally, transfers an acetyl group from acetyl-CoA to L-homoserine, forming acetyl-L-homoserine. The chain is Homoserine O-acetyltransferase from Bacillus cereus (strain B4264).